Here is a 221-residue protein sequence, read N- to C-terminus: Superoxide dismutase [Mn] 1, mitochondrial (221 aa).

The N-terminal 24 residues, 1 to 24, are a transit peptide targeting the mitochondrion; it reads MLQNTVRCVSKLVQPITGVAAVRS. H50, H98, D182, and H186 together coordinate Mn(2+).

Belongs to the iron/manganese superoxide dismutase family. In terms of assembly, homotetramer. Mn(2+) is required as a cofactor.

It is found in the mitochondrion matrix. It catalyses the reaction 2 superoxide + 2 H(+) = H2O2 + O2. Destroys superoxide anion radicals which are normally produced within the cells and which are toxic to biological systems. This is Superoxide dismutase [Mn] 1, mitochondrial (sod-2) from Caenorhabditis elegans.